The primary structure comprises 1059 residues: IQ motif-containing protein H (1059 aa).

The stretch at 6-35 (KNKDEVGNILVKVQDDLRQLKKNIVQFTVQ) forms a coiled coil. The interval 245–267 (MESAESRLLRAPPPSAASASSDN) is disordered. Residues 401–430 (HQAAAVRIQTCWRRYSARTAYLIRLRSKWA) form the IQ domain.

This is IQ motif-containing protein H (iqch) from Danio rerio (Zebrafish).